The primary structure comprises 341 residues: Tetraacyldisaccharide 4'-kinase (341 aa).

Position 54–61 (54–61) interacts with ATP; that stretch reads TVGGAGKT.

The protein belongs to the LpxK family.

It catalyses the reaction a lipid A disaccharide + ATP = a lipid IVA + ADP + H(+). It participates in glycolipid biosynthesis; lipid IV(A) biosynthesis; lipid IV(A) from (3R)-3-hydroxytetradecanoyl-[acyl-carrier-protein] and UDP-N-acetyl-alpha-D-glucosamine: step 6/6. Functionally, transfers the gamma-phosphate of ATP to the 4'-position of a tetraacyldisaccharide 1-phosphate intermediate (termed DS-1-P) to form tetraacyldisaccharide 1,4'-bis-phosphate (lipid IVA). The polypeptide is Tetraacyldisaccharide 4'-kinase (Brucella melitensis biotype 1 (strain ATCC 23456 / CCUG 17765 / NCTC 10094 / 16M)).